Consider the following 263-residue polypeptide: uncharacterized protein (263 aa).

The protein belongs to the AtsA family.

The protein resides in the plastid. The protein localises to the chloroplast. This is an uncharacterized protein from Porphyra purpurea (Red seaweed).